A 31-amino-acid polypeptide reads, in one-letter code: Cytochrome b6-f complex subunit 6 (31 aa).

The chain crosses the membrane as a helical span at residues 4 to 24 (LLSYFGLLLAALISTLVLFIG).

The protein belongs to the PetL family. In terms of assembly, the 4 large subunits of the cytochrome b6-f complex are cytochrome b6, subunit IV (17 kDa polypeptide, PetD), cytochrome f and the Rieske protein, while the 4 small subunits are PetG, PetL, PetM and PetN. The complex functions as a dimer.

The protein localises to the plastid. The protein resides in the chloroplast thylakoid membrane. Its function is as follows. Component of the cytochrome b6-f complex, which mediates electron transfer between photosystem II (PSII) and photosystem I (PSI), cyclic electron flow around PSI, and state transitions. PetL is important for photoautotrophic growth as well as for electron transfer efficiency and stability of the cytochrome b6-f complex. This is Cytochrome b6-f complex subunit 6 from Psilotum nudum (Whisk fern).